Here is a 1487-residue protein sequence, read N- to C-terminus: Chromosome partition protein MukB (1487 aa).

34–41 (GGNGAGKS) is an ATP binding site. Coiled-coil stretches lie at residues 297–426 (SSRE…LEKA), 460–666 (ALKH…RLAS), 781–806 (RAAR…AKAA), 836–1111 (EQAL…RTFV), and 1210–1266 (VEAI…LSNI). The interval 667 to 784 (PGGSNDPRLK…VIPLFGRAAR (118 aa)) is flexible hinge.

This sequence belongs to the SMC family. MukB subfamily. In terms of assembly, homodimerization via its hinge domain. Binds to DNA via its C-terminal region. Interacts, and probably forms a ternary complex, with MukE and MukF via its C-terminal region. The complex formation is stimulated by calcium or magnesium. Interacts with tubulin-related protein FtsZ.

The protein localises to the cytoplasm. Its subcellular location is the nucleoid. Plays a central role in chromosome condensation, segregation and cell cycle progression. Functions as a homodimer, which is essential for chromosome partition. Involved in negative DNA supercoiling in vivo, and by this means organize and compact chromosomes. May achieve or facilitate chromosome segregation by condensation DNA from both sides of a centrally located replisome during cell division. The polypeptide is Chromosome partition protein MukB (Vibrio vulnificus (strain CMCP6)).